A 62-amino-acid polypeptide reads, in one-letter code: ATP synthase subunit K, mitochondrial (62 aa).

A helical transmembrane segment spans residues His14–Pro30.

As to quaternary structure, F-type ATP synthases have 2 components, the catalytic core F(1) and the membrane-embedded component F(0), linked together by a central stalk and a peripheral stalk. The central stalk, also called rotor shaft, is often seen as part of F(1). The peripheral stalk is seen as part of F(0). F(0) contains the membrane channel next to the rotor. F-type ATP synthases form dimers but each monomer functions independently in ATP generation. The dimer consists of 18 different polypeptides: ATP1 (subunit alpha, part of F(1), 3 molecules per monomer), ATP2 (subunit beta, part of F(1), 3 molecules per monomer), ATP3 (subunit gamma, part of the central stalk), ATP4 (subunit b, part of the peripheral stalk), ATP5/OSCP (subunit 5/OSCP, part of the peripheral stalk), ATP6 (subunit a, part of the peripheral stalk), ATP7 (subunit d, part of the peripheral stalk), ATP8 (subunit 8, part of the peripheral stalk), OLI1 (subunit c, part of the rotor, 10 molecules per monomer), ATP14 (subunit h, part of the peripheral stalk), ATP15 (subunit epsilon, part of the central stalk), ATP16 (subunit delta, part of the central stalk), ATP17 (subunit f, part of the peripheral stalk), ATP18 (subunit i/j, part of the peripheral stalk). Dimer-specific subunits are ATP19 (subunit k, at interface between monomers), ATP20 (subunit g, at interface between monomers), TIM11 (subunit e, at interface between monomers). Also contains subunit L.

It localises to the mitochondrion inner membrane. Mitochondrial membrane ATP synthase (F(1)F(0) ATP synthase or Complex V) produces ATP from ADP in the presence of a proton gradient across the membrane which is generated by electron transport complexes of the respiratory chain. F-type ATP synthases consist of two structural domains, F(1) - containing the extramembraneous catalytic core, and F(0) - containing the membrane proton channel, linked together by a central stalk and a peripheral stalk. During catalysis, ATP synthesis in the catalytic domain of F(1) is coupled via a rotary mechanism of the central stalk subunits to proton translocation. Part of the complex F(0) domain. Minor subunit located with subunit a/ATP6 in the membrane. The K chain binds the dimeric form by interacting with the G and E chains. This Pichia angusta (Yeast) protein is ATP synthase subunit K, mitochondrial.